The sequence spans 97 residues: Integration host factor subunit alpha (97 aa).

The protein belongs to the bacterial histone-like protein family. As to quaternary structure, heterodimer of an alpha and a beta chain.

In terms of biological role, this protein is one of the two subunits of integration host factor, a specific DNA-binding protein that functions in genetic recombination as well as in transcriptional and translational control. In Hydrogenovibrio crunogenus (strain DSM 25203 / XCL-2) (Thiomicrospira crunogena), this protein is Integration host factor subunit alpha.